A 485-amino-acid polypeptide reads, in one-letter code: Pumilio domain-containing protein 6 (485 aa).

2 disordered regions span residues 29–48 (NKTHKNKNPKPPVKLLPYRH) and 55–76 (SDLDNYIFNSGSGSSDDETPPP). A compositionally biased stretch (polar residues) spans 55-68 (SDLDNYIFNSGSGS). Pumilio repeat units follow at residues 86-124 (EVLLNGLLIDFAIDPSGVKFLEANYPLDSEDQIRKAVFE), 125-163 (KLTESTTLFVGLCHSRNGNFIVQKLVELATPAEQRELLR), 164-200 (QMIDGGLLVMCKDKFACRVVQLALQKFDHSNVFQLIQ), 201-236 (ELSTFDLAAMCTDQISIHVIQRVVKQLPVDMWTFFV), 237-279 (HFLS…FRIQ), 287-324 (CIVRNCYRLSSNEFANYVIQYVIKSSGIMEMYRDTIID), 326-361 (CLLRNLLSMSQDKYASHVIEGAFLFAPPALLHEMME), and 372-411 (ELNRDALDILLFHQYGNYVVQQMISICTAALIGKEERQLP). The RNA-binding stretch occupies residues 439–454 (FSSGKKIIDSVMRHGV).

In terms of biological role, RNA-binding protein that binds to the consensus sequence 5'-CUCUGUAUCUUGU-3' in mRNA 3'-UTRs and modulates mRNA expression and stability. Functions redundantly with puf-5 and puf-7 in oocyte formation and organization, early embryonic cell divisions, and repression of expression of glp-1 and other maternal mRNAs in late oogenesis. The protein is Pumilio domain-containing protein 6 of Caenorhabditis elegans.